Consider the following 104-residue polypeptide: Large ribosomal subunit protein uL24 (104 aa).

Belongs to the universal ribosomal protein uL24 family. As to quaternary structure, part of the 50S ribosomal subunit.

One of two assembly initiator proteins, it binds directly to the 5'-end of the 23S rRNA, where it nucleates assembly of the 50S subunit. In terms of biological role, one of the proteins that surrounds the polypeptide exit tunnel on the outside of the subunit. This chain is Large ribosomal subunit protein uL24, found in Bartonella tribocorum (strain CIP 105476 / IBS 506).